The chain runs to 131 residues: D-ribose pyranase (131 aa).

The Proton donor role is filled by His20. Substrate is bound by residues Asp28, His98, and Tyr120–Asn122.

The protein belongs to the RbsD / FucU family. RbsD subfamily. As to quaternary structure, homodecamer.

The protein resides in the cytoplasm. It carries out the reaction beta-D-ribopyranose = beta-D-ribofuranose. Its pathway is carbohydrate metabolism; D-ribose degradation; D-ribose 5-phosphate from beta-D-ribopyranose: step 1/2. In terms of biological role, catalyzes the interconversion of beta-pyran and beta-furan forms of D-ribose. In Lactobacillus johnsonii (strain CNCM I-12250 / La1 / NCC 533), this protein is D-ribose pyranase.